Consider the following 322-residue polypeptide: ATP-dependent 6-phosphofructokinase (322 aa).

Residue G11 participates in ATP binding. 21 to 25 (RAVVR) contributes to the ADP binding site. Residues 72-73 (RC) and 102-105 (GDGS) each bind ATP. D103 provides a ligand contact to Mg(2+). Substrate is bound at residue 127–129 (TID). D129 serves as the catalytic Proton acceptor. ADP is bound at residue R156. Substrate-binding positions include R164 and 171-173 (MGR). Residues 187-189 (GAE), R213, and 215-217 (KKH) contribute to the ADP site. Residues E224, R245, and 251–254 (HIQR) contribute to the substrate site.

It belongs to the phosphofructokinase type A (PFKA) family. ATP-dependent PFK group I subfamily. Prokaryotic clade 'B1' sub-subfamily. In terms of assembly, homotetramer. The cofactor is Mg(2+).

It is found in the cytoplasm. The catalysed reaction is beta-D-fructose 6-phosphate + ATP = beta-D-fructose 1,6-bisphosphate + ADP + H(+). The protein operates within carbohydrate degradation; glycolysis; D-glyceraldehyde 3-phosphate and glycerone phosphate from D-glucose: step 3/4. Its activity is regulated as follows. Allosterically activated by ADP and other diphosphonucleosides, and allosterically inhibited by phosphoenolpyruvate. Catalyzes the phosphorylation of D-fructose 6-phosphate to fructose 1,6-bisphosphate by ATP, the first committing step of glycolysis. The polypeptide is ATP-dependent 6-phosphofructokinase (Staphylococcus carnosus (strain TM300)).